We begin with the raw amino-acid sequence, 60 residues long: Andropin (60 aa).

Residues 1–23 form the signal peptide; sequence MKYFVVLVVLALILAIAVGPSDA.

This sequence belongs to the andropin family. Ejaculatory duct of adult males.

The protein resides in the secreted. In terms of biological role, male-specific peptide with moderate activity against Gram-positive bacteria. The sequence is that of Andropin (Anp) from Drosophila simulans (Fruit fly).